The chain runs to 446 residues: Transcription factor Dp-2 (446 aa).

Threonine 2 carries the post-translational modification N-acetylthreonine. Serine 24 is modified (phosphoserine). An interaction with CEBPA region spans residues 60-82 (PQMIISTPQRLTSSGSVLIGSPY). The short motif at 103 to 118 (GDRKRARKFIDSDFSE) is the Nuclear localization signal element. Phosphoserine is present on serine 122. A DNA-binding region spans residues 129 to 210 (GKGLRHFSMK…KKEIKWIGLP (82 aa)). The short motif at 176 to 210 (DQKNIRRRVYDALNVLMAMNIISKEKKEIKWIGLP) is the DEF box element. Residues 219–292 (NLEIEKQRRI…RKTVIDCSIS (74 aa)) form a dimerization region. The DCB1 stretch occupies residues 229 to 261 (ERIKQKRAQLQELLLQQIAFKNLVQRNRQNEQQ). The interval 274–330 (LPFIIINTSRKTVIDCSISSDKFEYLFNFDNTFEIHDDIEVLKRMGMSFGLESGKCS) is DCB2. Over residues 409–419 (SHQSSSAASHC) the composition is skewed to low complexity. Residues 409-446 (SHQSSSAASHCSESRGETPCSFNDEDEEDDEEDSSSPE) form a disordered region. Over residues 431-446 (NDEDEEDDEEDSSSPE) the composition is skewed to acidic residues.

It belongs to the E2F/DP family. In terms of assembly, component of the DRTF1/E2F transcription factor complex. Forms heterodimers with E2F family members. The complex can interact with hypophosphorylated retinoblastoma protein RB1 and related proteins (RBL1 and RBL2) that inhibit the E2F transactivation domain. During the cell cycle, RB becomes phosphorylated in mid-to-late G1 phase, detaches from the DRTF1/E2F complex rendering E2F transcriptionally active. Viral oncoproteins, notably E1A, T-antigen and HPV E7, are capable of sequestering RB protein, thus releasing the active complex. Interacts with GMCL. Component of the DREAM complex (also named LINC complex) at least composed of E2F4, E2F5, LIN9, LIN37, LIN52, LIN54, MYBL1, MYBL2, RBL1, RBL2, RBBP4, TFDP1 and TFDP2. The complex exists in quiescent cells where it represses cell cycle-dependent genes. It dissociates in S phase when LIN9, LIN37, LIN52 and LIN54 form a subcomplex that binds to MYBL2. The complex TFDP2:E2F1 interacts with CEBPA; the interaction prevents CEBPA binding to target genes promoters and represses its transcriptional activity. Post-translationally, ser-24 is probably phosphorylated by CDK2. In terms of tissue distribution, high levels in heart and skeletal muscle. Also found in placenta, kidney, brain, lung and liver. The presence as well as the abundance of the different transcripts appear to vary significantly in different tissues and cell lines.

Its subcellular location is the nucleus. Its function is as follows. Can stimulate E2F-dependent transcription. Binds DNA cooperatively with E2F family members through the E2 recognition site, 5'-TTTC[CG]CGC-3', found in the promoter region of a number of genes whose products are involved in cell cycle regulation or in DNA replication. The TFDP2:E2F complex functions in the control of cell-cycle progression from G1 to S phase. The E2F1:DP complex appears to mediate both cell proliferation and apoptosis. Blocks adipocyte differentiation by repressing CEBPA binding to its target gene promoters. In Homo sapiens (Human), this protein is Transcription factor Dp-2 (TFDP2).